Consider the following 298-residue polypeptide: MATH domain and coiled-coil domain-containing protein At3g58280 (298 aa).

The MATH domain maps to 9-128; sequence KKTFGWVIKD…NGEITIIAEV (120 aa). Positions 240–288 form a coiled coil; the sequence is NLDWLRQKFDQALEKQIAYDTRIGELEKQVKKRKLAVTELEADLEKEKA.

This Arabidopsis thaliana (Mouse-ear cress) protein is MATH domain and coiled-coil domain-containing protein At3g58280.